Here is a 371-residue protein sequence, read N- to C-terminus: Queuine tRNA-ribosyltransferase (371 aa).

Asp-89 serves as the catalytic Proton acceptor. Residues 89–93 (DSGGF), Asp-143, Gln-185, and Gly-212 contribute to the substrate site. The RNA binding stretch occupies residues 243 to 249 (GVGKPED). Asp-262 (nucleophile) is an active-site residue. The interval 267 to 271 (TRNAR) is RNA binding; important for wobble base 34 recognition. Zn(2+) contacts are provided by Cys-300, Cys-302, Cys-305, and His-331.

It belongs to the queuine tRNA-ribosyltransferase family. As to quaternary structure, homodimer. Within each dimer, one monomer is responsible for RNA recognition and catalysis, while the other monomer binds to the replacement base PreQ1. Zn(2+) is required as a cofactor.

It carries out the reaction 7-aminomethyl-7-carbaguanine + guanosine(34) in tRNA = 7-aminomethyl-7-carbaguanosine(34) in tRNA + guanine. Its pathway is tRNA modification; tRNA-queuosine biosynthesis. Its function is as follows. Catalyzes the base-exchange of a guanine (G) residue with the queuine precursor 7-aminomethyl-7-deazaguanine (PreQ1) at position 34 (anticodon wobble position) in tRNAs with GU(N) anticodons (tRNA-Asp, -Asn, -His and -Tyr). Catalysis occurs through a double-displacement mechanism. The nucleophile active site attacks the C1' of nucleotide 34 to detach the guanine base from the RNA, forming a covalent enzyme-RNA intermediate. The proton acceptor active site deprotonates the incoming PreQ1, allowing a nucleophilic attack on the C1' of the ribose to form the product. After dissociation, two additional enzymatic reactions on the tRNA convert PreQ1 to queuine (Q), resulting in the hypermodified nucleoside queuosine (7-(((4,5-cis-dihydroxy-2-cyclopenten-1-yl)amino)methyl)-7-deazaguanosine). This Pseudomonas putida (strain ATCC 47054 / DSM 6125 / CFBP 8728 / NCIMB 11950 / KT2440) protein is Queuine tRNA-ribosyltransferase.